Reading from the N-terminus, the 344-residue chain is HTH-type transcriptional regulator MalR (344 aa).

Residues 1 to 54 form the HTH lacI-type domain; it reads MTTRLADIAAQAGVSEATVSRVLNGKPGVAATTRQSVLAALDVLGYERPVRLRQ. Residues 5–24 constitute a DNA-binding region (H-T-H motif); the sequence is LADIAAQAGVSEATVSRVLN.

Functionally, transcriptional repressor of the maltosaccharide utilization operon malEFG. This chain is HTH-type transcriptional regulator MalR (malR), found in Streptomyces coelicolor (strain ATCC BAA-471 / A3(2) / M145).